A 186-amino-acid chain; its full sequence is Tumor necrosis factor alpha-induced protein 8-like protein 1 (186 aa).

This sequence belongs to the TNFAIP8 family. Interacts with FBXW5; TNFAIP8L1 competes with TSC2 to bind FBXW5 increasing TSC2 stability by preventing its ubiquitination. High expression detected in most carcinoma cell lines, especially in cells transformed with virus genomes.

Its subcellular location is the cytoplasm. Functionally, acts as a negative regulator of mTOR activity. This Homo sapiens (Human) protein is Tumor necrosis factor alpha-induced protein 8-like protein 1 (TNFAIP8L1).